We begin with the raw amino-acid sequence, 206 residues long: Probable GTP-binding protein EngB (206 aa).

One can recognise an EngB-type G domain in the interval 24 to 198 (QGREVAFAGR…HARLDEWLGL (175 aa)). GTP-binding positions include 32–39 (GRSNVGKS), 59–63 (GRTQL), 77–80 (DLPG), 144–147 (TKAD), and 177–179 (FSA). Ser-39 and Thr-61 together coordinate Mg(2+).

Belongs to the TRAFAC class TrmE-Era-EngA-EngB-Septin-like GTPase superfamily. EngB GTPase family. Mg(2+) serves as cofactor.

Functionally, necessary for normal cell division and for the maintenance of normal septation. The sequence is that of Probable GTP-binding protein EngB from Alkalilimnicola ehrlichii (strain ATCC BAA-1101 / DSM 17681 / MLHE-1).